Consider the following 446-residue polypeptide: Signal recognition particle protein (446 aa).

GTP-binding positions include 106-113 (GLQGSGKT), 188-192 (DTAGR), and 246-249 (SKLD).

Belongs to the GTP-binding SRP family. SRP54 subfamily. As to quaternary structure, part of the signal recognition particle protein translocation system, which is composed of SRP and FtsY.

The protein resides in the cytoplasm. The catalysed reaction is GTP + H2O = GDP + phosphate + H(+). Functionally, involved in targeting and insertion of nascent membrane proteins into the cytoplasmic membrane. Binds to the hydrophobic signal sequence of the ribosome-nascent chain (RNC) as it emerges from the ribosomes. The SRP-RNC complex is then targeted to the cytoplasmic membrane where it interacts with the SRP receptor FtsY. The sequence is that of Signal recognition particle protein from Mycoplasma genitalium (strain ATCC 33530 / DSM 19775 / NCTC 10195 / G37) (Mycoplasmoides genitalium).